A 357-amino-acid polypeptide reads, in one-letter code: Histidine biosynthesis bifunctional protein HisB (357 aa).

The segment at 1-168 (MSEKVLFIDR…IVFKLTKKHD (168 aa)) is histidinol-phosphatase. The active-site Nucleophile is D9. 2 residues coordinate Mg(2+): D9 and D11. D11 functions as the Proton donor in the catalytic mechanism. Zn(2+) is bound by residues C93, H95, C101, and C103. D130 serves as a coordination point for Mg(2+). The imidazoleglycerol-phosphate dehydratase stretch occupies residues 169-357 (RHAKVVRNTK…KNLPSSKGLL (189 aa)).

The protein in the N-terminal section; belongs to the histidinol-phosphatase family. This sequence in the C-terminal section; belongs to the imidazoleglycerol-phosphate dehydratase family. Mg(2+) is required as a cofactor. Requires Zn(2+) as cofactor.

The protein localises to the cytoplasm. The catalysed reaction is D-erythro-1-(imidazol-4-yl)glycerol 3-phosphate = 3-(imidazol-4-yl)-2-oxopropyl phosphate + H2O. It catalyses the reaction L-histidinol phosphate + H2O = L-histidinol + phosphate. Its pathway is amino-acid biosynthesis; L-histidine biosynthesis; L-histidine from 5-phospho-alpha-D-ribose 1-diphosphate: step 6/9. It participates in amino-acid biosynthesis; L-histidine biosynthesis; L-histidine from 5-phospho-alpha-D-ribose 1-diphosphate: step 8/9. This chain is Histidine biosynthesis bifunctional protein HisB, found in Buchnera aphidicola subsp. Baizongia pistaciae (strain Bp).